We begin with the raw amino-acid sequence, 496 residues long: Membrane-bound lytic murein transglycosylase F (496 aa).

The first 31 residues, 1 to 31, serve as a signal peptide directing secretion; it reads MPIFSTRVLTYLRCIFRLFIGLTLLLTLVGC. The segment at 32-271 is non-LT domain; the sequence is DFYTPSSQLE…KLDEKYFGHV (240 aa). Residues 273-496 form an LT domain region; that stretch reads NFDFVDTRTF…AEVVKQITLR (224 aa). Residue Glu316 is part of the active site. Residues 464 to 486 form a disordered region; it reads HRREELDDDDSSEPPSAERPTVI.

This sequence in the N-terminal section; belongs to the bacterial solute-binding protein 3 family. The protein in the C-terminal section; belongs to the transglycosylase Slt family.

It localises to the cell outer membrane. It carries out the reaction Exolytic cleavage of the (1-&gt;4)-beta-glycosidic linkage between N-acetylmuramic acid (MurNAc) and N-acetylglucosamine (GlcNAc) residues in peptidoglycan, from either the reducing or the non-reducing ends of the peptidoglycan chains, with concomitant formation of a 1,6-anhydrobond in the MurNAc residue.. Functionally, murein-degrading enzyme that degrades murein glycan strands and insoluble, high-molecular weight murein sacculi, with the concomitant formation of a 1,6-anhydromuramoyl product. Lytic transglycosylases (LTs) play an integral role in the metabolism of the peptidoglycan (PG) sacculus. Their lytic action creates space within the PG sacculus to allow for its expansion as well as for the insertion of various structures such as secretion systems and flagella. The sequence is that of Membrane-bound lytic murein transglycosylase F from Aeromonas hydrophila subsp. hydrophila (strain ATCC 7966 / DSM 30187 / BCRC 13018 / CCUG 14551 / JCM 1027 / KCTC 2358 / NCIMB 9240 / NCTC 8049).